We begin with the raw amino-acid sequence, 125 residues long: Calcitonin receptor-stimulating peptide 1 (125 aa).

The N-terminal stretch at 1 to 25 (MGFWKFPPFLVLSILVLYQAGMFHA) is a signal peptide. Positions 26 to 77 (APFRSVFDGRFDPATLDEEESRLLLAAMVNDYEQMRARESEKAQKTEGSRIQ) are excised as a propeptide. A disulfide bridge links C81 with C86.

It belongs to the calcitonin family.

It is found in the secreted. Its function is as follows. Stimulates cAMP production in porcine kidney cell line LLC-PK1 via the calcitonin receptor (CT) but not via the CT-like (CL) receptor. The protein is Calcitonin receptor-stimulating peptide 1 (CRSP1) of Capra hircus (Goat).